A 411-amino-acid chain; its full sequence is Dual-specificity RNA methyltransferase RlmN (411 aa).

Residue glutamate 124 is the Proton acceptor of the active site. In terms of domain architecture, Radical SAM core spans 130–379; the sequence is EEGRGTLCIS…IRTPRGRDIL (250 aa). A disulfide bridge connects residues cysteine 137 and cysteine 382. Cysteine 144, cysteine 148, and cysteine 151 together coordinate [4Fe-4S] cluster. S-adenosyl-L-methionine contacts are provided by residues 208–209, serine 240, 262–264, and asparagine 339; these read GE and SLH. Cysteine 382 functions as the S-methylcysteine intermediate in the catalytic mechanism.

This sequence belongs to the radical SAM superfamily. RlmN family. [4Fe-4S] cluster is required as a cofactor.

The protein resides in the cytoplasm. The catalysed reaction is adenosine(2503) in 23S rRNA + 2 reduced [2Fe-2S]-[ferredoxin] + 2 S-adenosyl-L-methionine = 2-methyladenosine(2503) in 23S rRNA + 5'-deoxyadenosine + L-methionine + 2 oxidized [2Fe-2S]-[ferredoxin] + S-adenosyl-L-homocysteine. It catalyses the reaction adenosine(37) in tRNA + 2 reduced [2Fe-2S]-[ferredoxin] + 2 S-adenosyl-L-methionine = 2-methyladenosine(37) in tRNA + 5'-deoxyadenosine + L-methionine + 2 oxidized [2Fe-2S]-[ferredoxin] + S-adenosyl-L-homocysteine. Specifically methylates position 2 of adenine 2503 in 23S rRNA and position 2 of adenine 37 in tRNAs. m2A2503 modification seems to play a crucial role in the proofreading step occurring at the peptidyl transferase center and thus would serve to optimize ribosomal fidelity. This chain is Dual-specificity RNA methyltransferase RlmN, found in Sinorhizobium fredii (strain NBRC 101917 / NGR234).